A 489-amino-acid chain; its full sequence is MALLFLLPLVMQGVSRAEMGTADLGPSSVPTPTNVTIESYNMNPIVYWEYQIMPQVPVFTVEVKNYGVKNSEWIDACINISHHYCNISDHVGDPSNSLWVRVKARVGQKESAYAKSEEFAVCRDGKIGPPKLDIRKEEKQIMIDIFHPSVFVNGDEQEVDYDPETTCYIRVYNVYVRMNGSEIQYKILTQKEDDCDEIQCQLAIPVSSLNSQYCVSAEGVLHVWGVTTEKSKEVCITIFNSSIKGSLWIPVVAALLLFLVLSLVFICFYIKKINPLKEKSIILPKSLISVVRSATLETKPESKYVSLITSYQPFSLEKEVVCEEPLSPATVPGMHTEDNPGKVEHTEELSSITEVVTTEENIPDVVPGSHLTPIERESSSPLSSNQSEPGSIALNSYHSRNCSESDHSRNGFDTDSSCLESHSSLSDSEFPPNNKGEIKTEGQELITVIKAPTSFGYDKPHVLVDLLVDDSGKESLIGYRPTEDSKEFS.

An N-terminal signal peptide occupies residues 1–17; it reads MALLFLLPLVMQGVSRA. Residues 18 to 245 lie on the Extracellular side of the membrane; that stretch reads EMGTADLGPS…ITIFNSSIKG (228 aa). Asparagine 34, asparagine 79, and asparagine 86 each carry an N-linked (GlcNAc...) asparagine glycan. The cysteines at positions 77 and 85 are disulfide-linked. A disulfide bond links cysteine 122 and cysteine 167. An N-linked (GlcNAc...) asparagine glycan is attached at asparagine 179. 2 disulfides stabilise this stretch: cysteine 195–cysteine 200 and cysteine 214–cysteine 235. Asparagine 240 carries an N-linked (GlcNAc...) asparagine glycan. A helical transmembrane segment spans residues 246–266; it reads SLWIPVVAALLLFLVLSLVFI. The Cytoplasmic segment spans residues 267–489; sequence CFYIKKINPL…RPTEDSKEFS (223 aa). Residues 329-437 form a disordered region; it reads ATVPGMHTED…SEFPPNNKGE (109 aa). The span at 335 to 348 shows a compositional bias: basic and acidic residues; sequence HTEDNPGKVEHTEE. Residues 349–360 show a composition bias toward polar residues; sequence LSSITEVVTTEE. Residue serine 369 is modified to Phosphoserine. Threonine 372 carries the post-translational modification Phosphothreonine. A Phosphoserine modification is found at serine 378. Residues 379 to 391 show a composition bias toward low complexity; sequence SSPLSSNQSEPGS. Residues 401-412 show a composition bias toward basic and acidic residues; that stretch reads NCSESDHSRNGF. Phosphoserine is present on serine 403. Residues 415–429 show a composition bias toward low complexity; sequence DSSCLESHSSLSDSE. Position 457 is a phosphotyrosine (tyrosine 457).

Belongs to the type II cytokine receptor family. Monomer. Heterodimer with IFNGR2, to form the IFNG receptor complex. Interacts with JAK1. Interacts (when phosphorylated) with STAT1. Interacts with SOCS1. Post-translationally, phosphorylated at Ser/Thr residues. Phosphorylation of Tyr-457 is required for IFNG receptor signal transduction. Influenza virus infection leads to phosphorylation in a CSNK1A1-dependent manner. In terms of processing, ubiquitinated after phosphorylation in a CSNK1A1-dependent manner, leading to the lysosome-dependent degradation. Proteasomally degraded through 'Lys-48'-mediated ubiquitination. Ubiquitination is necessary for efficient IFNGR1 signaling.

Its subcellular location is the cell membrane. Functionally, receptor subunit for interferon gamma/INFG that plays crucial roles in antimicrobial, antiviral, and antitumor responses by activating effector immune cells and enhancing antigen presentation. Associates with transmembrane accessory factor IFNGR2 to form a functional receptor. Upon ligand binding, the intracellular domain of IFNGR1 opens out to allow association of downstream signaling components JAK1 and JAK2. In turn, activated JAK1 phosphorylates IFNGR1 to form a docking site for STAT1. Subsequent phosphorylation of STAT1 leads to dimerization, translocation to the nucleus, and stimulation of target gene transcription. STAT3 can also be activated in a similar manner although activation seems weaker. IFNGR1 intracellular domain phosphorylation also provides a docking site for SOCS1 that regulates the JAK-STAT pathway by competing with STAT1 binding to IFNGR1. The polypeptide is Interferon gamma receptor 1 (Homo sapiens (Human)).